Reading from the N-terminus, the 709-residue chain is D-(-)-3-hydroxybutyrate oligomer hydrolase (709 aa).

The signal sequence occupies residues Met-1–Ala-26. The segment at Gly-58–Pro-77 is disordered. The active-site Charge relay system is Ser-305.

The protein belongs to the D-(-)-3-hydroxybutyrate oligomer hydrolase family.

It localises to the secreted. It carries out the reaction (3R)-hydroxybutanoate dimer + H2O = 2 (R)-3-hydroxybutanoate + H(+). The protein operates within lipid metabolism; butanoate metabolism. Its function is as follows. Participates in the degradation of poly-3-hydroxybutyrate (PHB). It works downstream of poly(3-hydroxybutyrate) depolymerase, hydrolyzing D(-)-3-hydroxybutyrate oligomers of various length (3HB-oligomers) into 3HB-monomers. The protein is D-(-)-3-hydroxybutyrate oligomer hydrolase of Paracidovorax citrulli (strain AAC00-1) (Acidovorax citrulli).